A 305-amino-acid chain; its full sequence is NAD-dependent protein deacylase sirtuin-5, mitochondrial (305 aa).

A mitochondrion-targeting transit peptide spans 1–32; that stretch reads MIVRQLWCSRGSTSHLCAAVRLNWRSPKMTRP. Residues 33–303 enclose the Deacetylase sirtuin-type domain; sequence SSDLTAFREH…PPALERHESE (271 aa). 54 to 73 lines the NAD(+) pocket; that stretch reads GAGVSAESGVPTFRGPGGFW. 2 residues coordinate substrate: Tyr-98 and Arg-101. 136 to 139 serves as a coordination point for NAD(+); it reads QNID. His-154 (proton acceptor) is an active-site residue. Positions 162, 165, 203, and 208 each coordinate Zn(2+). NAD(+)-binding positions include 245 to 247, 271 to 273, and Cys-289; these read GTS and NME.

This sequence belongs to the sirtuin family. Class III subfamily. Zn(2+) is required as a cofactor.

It is found in the mitochondrion. The protein resides in the cytoplasm. It localises to the cytosol. The protein localises to the nucleus. It carries out the reaction N(6)-malonyl-L-lysyl-[protein] + NAD(+) + H2O = 2''-O-malonyl-ADP-D-ribose + nicotinamide + L-lysyl-[protein]. It catalyses the reaction N(6)-succinyl-L-lysyl-[protein] + NAD(+) + H2O = 2''-O-succinyl-ADP-D-ribose + nicotinamide + L-lysyl-[protein]. The enzyme catalyses N(6)-glutaryl-L-lysyl-[protein] + NAD(+) + H2O = 2''-O-glutaryl-ADP-D-ribose + nicotinamide + L-lysyl-[protein]. Functionally, NAD-dependent lysine demalonylase, desuccinylase and deglutarylase that specifically removes malonyl, succinyl and glutaryl groups on target proteins. Has weak NAD-dependent protein deacetylase activity; however this activity may not be physiologically relevant in vivo. The chain is NAD-dependent protein deacylase sirtuin-5, mitochondrial (sirt5) from Danio rerio (Zebrafish).